The primary structure comprises 34 residues: Somatostatin (34 aa).

Positions 1–20 (AVERPRQDGQVHEPPGRERK) are disordered. Cysteine 23 and cysteine 34 are oxidised to a cystine.

Belongs to the somatostatin family.

It localises to the secreted. Somatostatin inhibits the release of somatotropin. The chain is Somatostatin (sst) from Myxine glutinosa (Atlantic hagfish).